We begin with the raw amino-acid sequence, 293 residues long: Thiamine-monophosphate kinase (293 aa).

Mg(2+) is bound by residues E25, V39, D40, D68, and D113. ATP is bound by residues 112-113 and R136; that span reads GD. Residue D194 participates in Mg(2+) binding. S196 is an ATP binding site. D197 serves as a coordination point for Mg(2+). Positions 243 and 286 each coordinate substrate.

It belongs to the thiamine-monophosphate kinase family. As to quaternary structure, homodimer.

The catalysed reaction is thiamine phosphate + ATP = thiamine diphosphate + ADP. It functions in the pathway cofactor biosynthesis; thiamine diphosphate biosynthesis; thiamine diphosphate from thiamine phosphate: step 1/1. With respect to regulation, is inhibited by AMP; the mode of AMP inhibition is uncompetitive for both TMP and ATP. Catalyzes the ATP-dependent phosphorylation of thiamine-monophosphate (TMP) to form thiamine-pyrophosphate (TPP), the active form of vitamin B1. The polypeptide is Thiamine-monophosphate kinase (Pyrobaculum calidifontis (strain DSM 21063 / JCM 11548 / VA1)).